Reading from the N-terminus, the 858-residue chain is Ubiquitin carboxyl-terminal hydrolase 5 (858 aa).

Ala-2 bears the N-acetylalanine mark. The segment at 73–98 (LRRTRRPKEEDTSAGTGDPPRKKPTR) is disordered. A Glycyl lysine isopeptide (Lys-Gly) (interchain with G-Cter in SUMO) cross-link involves residue Lys-113. A phosphoserine mark is found at Ser-149 and Ser-156. The UBP-type; degenerate zinc-finger motif lies at 175–283 (QVSKHAFNLK…EHLSHFGIDM (109 aa)). Residues Cys-195 and Cys-816 are joined by a disulfide bond. 2 residues coordinate Zn(2+): Cys-199 and Cys-202. Position 209 (Trp-209) interacts with substrate. Cys-219 contacts Zn(2+). Position 221–224 (221–224 (RRYF)) interacts with substrate. His-232 contacts Zn(2+). 3 residues coordinate substrate: Tyr-259, Tyr-261, and Asp-264. The residue at position 292 (Thr-292) is a Phosphothreonine. In terms of domain architecture, USP spans 326-856 (TGIRNLGNSC…LGYIYFYQRV (531 aa)). Residue Cys-335 is the Nucleophile of the active site. A Phosphothreonine modification is found at Thr-623. 2 consecutive UBA domains span residues 654–695 (MLDE…VMSH) and 722–762 (PPPE…IFSH). Phosphoserine is present on residues Ser-779, Ser-783, and Ser-785. Residue His-818 is the Proton acceptor of the active site.

This sequence belongs to the peptidase C19 family. As to quaternary structure, homodimer. Interacts with TRIML1. In terms of processing, SUMOylated at Lys-113; SUMOylation affects the interaction with Cav3.2 channels. Post-translationally, ubiquitinated by SMURF1; leading to proteasomal degradation.

The protein localises to the cytoplasm. It localises to the stress granule. Its subcellular location is the nucleus. The enzyme catalyses Thiol-dependent hydrolysis of ester, thioester, amide, peptide and isopeptide bonds formed by the C-terminal Gly of ubiquitin (a 76-residue protein attached to proteins as an intracellular targeting signal).. Functionally, deubiquitinating enzyme that participates in a wide range of cellular processes by specifically cleaving isopeptide bonds between ubiquitin and substrate proteins or ubiquitin itself. Affects thereby important cellular signaling pathways such as NF-kappa-B, Wnt/beta-catenin, and cytokine production by regulating ubiquitin-dependent protein degradation. Participates in the activation of the Wnt signaling pathway by promoting FOXM1 deubiquitination and stabilization that induces the recruitment of beta-catenin to Wnt target gene promoter. Regulates the assembly and disassembly of heat-induced stress granules by mediating the hydrolysis of unanchored ubiquitin chains. Promotes lipopolysaccharide-induced apoptosis and inflammatory response by stabilizing the TXNIP protein. Affects T-cell biology by stabilizing the inhibitory receptor on T-cells PDC1. Acts as a negative regulator of autophagy by regulating ULK1 at both protein and mRNA levels. Acts also as a negative regulator of type I interferon production by simultaneously removing both 'Lys-48'-linked unanchored and 'Lys-63'-linked anchored polyubiquitin chains on the transcription factor IRF3. Modulates the stability of DNA mismatch repair protein MLH1 and counteracts the effect of the ubiquitin ligase UBR4. Upon activation by insulin, it gets phosphorylated through mTORC1-mediated phosphorylation to enhance YTHDF1 stability by removing 'Lys-11'-linked polyubiquitination. May also deubiquitinate other substrates such as the calcium channel CACNA1H. In Mus musculus (Mouse), this protein is Ubiquitin carboxyl-terminal hydrolase 5 (Usp5).